A 382-amino-acid polypeptide reads, in one-letter code: MRRTFSQLATRLLKSKDDELKSTLKYLTKGPVKLLGPLFESSEVNEQGSLLNRSRTKENNLQNHHIENILRILNSNLPEVESKKQKVAVHYDVLFSHLNSIVTQATDNKSSSSKELQGSSSEDLYDRLLLLQYVGKLTNVRQITEILLSKKFNKFDKVWEHRALFDEYQRVVISILLYYRTHDVQIRKDYEPRWLSDYSDLPFPLRRLLWRCLTSNVSEDNIRQNIIHYIKLLGANWRNNDLILIYQSLYEKSHILPDLTVLNHNKDDGFSFTQNQILLVRILRAISKCVEEEPKLVKKWLIDIVKLSIQSKIMLESPKKPSTPIMDQYKFIRSLDISIRSIHRTCQDKLIFEDLQVNLGSVLKMINEEEHELKTHLPLNLI.

Residues 1-12 (MRRTFSQLATRL) constitute a mitochondrion transit peptide.

Associates with the mitochondrial ribosome.

The protein resides in the mitochondrion. In terms of biological role, component of MIOREX complexes, large expressome-like assemblies of ribosomes with factors involved in all the steps of post-transcriptional gene expression. The polypeptide is MIOREX complex component 5 (Saccharomyces cerevisiae (strain ATCC 204508 / S288c) (Baker's yeast)).